The sequence spans 394 residues: Monoterpene synthase FDS-5, chloroplastic (394 aa).

The N-terminal 65 residues, 1–65 (MASFISLSSK…NLNSQFMQVY (65 aa)), are a transit peptide targeting the chloroplast. Isopentenyl diphosphate is bound by residues Lys-100, Arg-103, and Gln-138. Mg(2+) is bound by residues Asp-145 and Asp-149. The DDXXD motif signature appears at 145–149 (DDMMD). Arg-154 provides a ligand contact to dimethylallyl diphosphate. Arg-155 provides a ligand contact to isopentenyl diphosphate. Lys-242, Gln-281, Lys-298, and Lys-307 together coordinate dimethylallyl diphosphate.

This sequence belongs to the FPP/GGPP synthase family. Requires Mg(2+) as cofactor. Mn(2+) is required as a cofactor.

The protein resides in the plastid. The protein localises to the chloroplast. It catalyses the reaction isopentenyl diphosphate + dimethylallyl diphosphate = (2E)-geranyl diphosphate + diphosphate. The catalysed reaction is 2 dimethylallyl diphosphate = (R,R)-chrysanthemyl diphosphate + diphosphate. It carries out the reaction 2 dimethylallyl diphosphate = (R)-lavandulyl diphosphate + diphosphate. Functionally, condenses two molecules of dimethylallyl diphosphate (DMAPP) to produce mainly an irregular monoterpene, chrysanthemyl diphosphate (CPP) and lower amounts of a branched monoterpene, lavandulyl diphosphate (LPP). CPP is a precursor of the pyrethrin insecticides. When incubated with isopentenyl diphosphate (IPP) and DMAPP, catalyzes three competing isoprenoid condensation reactions, a chain elongation to give geranyl diphosphate (GPP), a cyclopropanation to give CPP and a branching to give LPP. The chain is Monoterpene synthase FDS-5, chloroplastic (FDS-5) from Artemisia spiciformis (Spiked big sagebrush).